The following is a 306-amino-acid chain: Glutamyl-Q tRNA(Asp) synthetase (306 aa).

Residues 29–33 (RFAPS) and Asp-65 each bind L-glutamate. Positions 32-42 (PSPTGPLHLGN) match the 'HIGH' region motif. Residues Cys-121, Cys-123, Tyr-141, and Cys-145 each contribute to the Zn(2+) site. Tyr-188 and Arg-206 together coordinate L-glutamate. Residues 244 to 248 (KLAKR) carry the 'KMSKS' region motif. Residue Lys-247 coordinates ATP.

Belongs to the class-I aminoacyl-tRNA synthetase family. GluQ subfamily. It depends on Zn(2+) as a cofactor.

Catalyzes the tRNA-independent activation of glutamate in presence of ATP and the subsequent transfer of glutamate onto a tRNA(Asp). Glutamate is transferred on the 2-amino-5-(4,5-dihydroxy-2-cyclopenten-1-yl) moiety of the queuosine in the wobble position of the QUC anticodon. The polypeptide is Glutamyl-Q tRNA(Asp) synthetase (Prochlorococcus marinus (strain MIT 9313)).